Reading from the N-terminus, the 578-residue chain is Oxygen sensor histidine kinase response regulator DevS/DosS (578 aa).

2 GAF domains span residues aspartate 63–valine 200 and glutamate 231–tryptophan 369. Histidine 149 is a heme binding site. Positions valine 383–glutamine 578 constitute a Histidine kinase domain. Histidine 395 is subject to Phosphohistidine; by autocatalysis.

It depends on Mg(2+) as a cofactor. Heme is required as a cofactor.

The protein localises to the cytoplasm. The catalysed reaction is ATP + protein L-histidine = ADP + protein N-phospho-L-histidine.. Its function is as follows. Member of the two-component regulatory system DevR/DevS (DosR/DosS) involved in onset of the dormancy response. Regulates an approximately 48-member regulon. Required for full induction of the DevR (DosR) regulon; acts later than DosT to positively regulate expression of the DevR regulon during adaptation to anaerobiosis. Characterized as an oxygen sensor; O(2) acts as a switch, with O(2)-bound Fe(2+) protein inactive in autophosphorylation. Has also been suggested to act as a redox sensor, or perhaps as a dual oxygen/redox sensor. Donates a phosphate group to transcriptional regulator DevR (DosR). This Mycobacterium tuberculosis (strain CDC 1551 / Oshkosh) protein is Oxygen sensor histidine kinase response regulator DevS/DosS (devS).